A 106-amino-acid chain; its full sequence is UPF0060 membrane protein Bxeno_B1021 (106 aa).

4 helical membrane passes run 2–22 (KTFL…YLPW), 30–50 (SIWL…LLTL), 58–78 (VYAA…WCVD), and 82–102 (PTLW…IIAF).

This sequence belongs to the UPF0060 family.

It localises to the cell inner membrane. The protein is UPF0060 membrane protein Bxeno_B1021 of Paraburkholderia xenovorans (strain LB400).